The primary structure comprises 300 residues: MHKIIIIMLFFLVSITWGTTWIAMKIAVETIPPFFATGIRFLAASPLLIILSYLTKKPLLFPYGQRRFQIFISIFYFSIPFTLMLYGGSYVNSSISSIIFANMPVLVLIISHFYLKKKINFIQKVGMVIALITLFFVLLIDLKSECFFQWKGILALLLALLSHAVIYVECQKKSCNVSVITFNALPSLISGIFLSIISWFIESPNINFFSTRSILAVFYLGNFCGICGILSYFYLQKRVSSFYASIVFLIFPLIAGFLEIYIYKKTILLYELWFIIPSGLGILLTLIPINFFKNIIRFSK.

The next 10 membrane-spanning stretches (helical) occupy residues 4-24 (IIIIMLFFLVSITWGTTWIAM), 31-51 (IPPFFATGIRFLAASPLLIIL), 68-88 (FQIFISIFYFSIPFTLMLYGG), 95-115 (ISSIIFANMPVLVLIISHFYL), 120-140 (NFIQKVGMVIALITLFFVLLI), 146-166 (CFFQWKGILALLLALLSHAVI), 177-197 (VSVITFNALPSLISGIFLSII), 214-234 (ILAVFYLGNFCGICGILSYFY), 242-262 (FYASIVFLIFPLIAGFLEIYI), and 272-292 (LWFIIPSGLGILLTLIPINFF). 2 consecutive EamA domains span residues 15–139 (ITWG…FVLL) and 161–287 (LSHA…LTLI).

It belongs to the EamA transporter family.

The protein localises to the cell membrane. This is an uncharacterized protein from Buchnera aphidicola subsp. Schizaphis graminum (strain Sg).